Here is a 509-residue protein sequence, read N- to C-terminus: Fumarate hydratase, mitochondrial (509 aa).

The transit peptide at 1–43 directs the protein to the mitochondrion; that stretch reads MYRSARSLHRFSASLSDLRAAQRSIKARNVCPAPGLRHQTVRM. Residues 144–146, 175–178, 185–187, and Thr233 contribute to the substrate site; these read SGT, HPND, and SSN. His234 functions as the Proton donor/acceptor in the catalytic mechanism. Residue Ser364 is part of the active site. Residues Ser365 and 370–372 contribute to the substrate site; that span reads KVN.

This sequence belongs to the class-II fumarase/aspartase family. Fumarase subfamily. As to quaternary structure, homotetramer.

It is found in the mitochondrion. Its subcellular location is the cytoplasm. The protein resides in the cytosol. It localises to the nucleus. The protein localises to the chromosome. It carries out the reaction (S)-malate = fumarate + H2O. It participates in carbohydrate metabolism; tricarboxylic acid cycle; (S)-malate from fumarate: step 1/1. In terms of biological role, catalyzes the reversible stereospecific interconversion of fumarate to L-malate. Experiments in other species have demonstrated that specific isoforms of this protein act in defined pathways and favor one direction over the other. Functionally, catalyzes the hydration of fumarate to L-malate in the tricarboxylic acid (TCA) cycle to facilitate a transition step in the production of energy in the form of NADH. Catalyzes the dehydration of L-malate to fumarate. Fumarate metabolism in the cytosol plays a role during urea cycle and arginine metabolism; fumarate being a by-product of the urea cycle and amino-acid catabolism. Also plays a role in DNA repair by promoting non-homologous end-joining (NHEJ). In response to DNA damage translocates to the nucleus and accumulates at DNA double-strand breaks (DSBs): acts by catalyzing formation of fumarate. The sequence is that of Fumarate hydratase, mitochondrial from Danio rerio (Zebrafish).